The chain runs to 364 residues: 4-hydroxythreonine-4-phosphate dehydrogenase (364 aa).

The substrate site is built by His148 and Thr149. Positions 177, 216, and 301 each coordinate a divalent metal cation. Substrate is bound by residues Lys309, Asn318, and Arg327.

This sequence belongs to the PdxA family. Homodimer. Requires Zn(2+) as cofactor. It depends on Mg(2+) as a cofactor. Co(2+) serves as cofactor.

The protein localises to the cytoplasm. The enzyme catalyses 4-(phosphooxy)-L-threonine + NAD(+) = 3-amino-2-oxopropyl phosphate + CO2 + NADH. It participates in cofactor biosynthesis; pyridoxine 5'-phosphate biosynthesis; pyridoxine 5'-phosphate from D-erythrose 4-phosphate: step 4/5. Its function is as follows. Catalyzes the NAD(P)-dependent oxidation of 4-(phosphooxy)-L-threonine (HTP) into 2-amino-3-oxo-4-(phosphooxy)butyric acid which spontaneously decarboxylates to form 3-amino-2-oxopropyl phosphate (AHAP). In Campylobacter jejuni (strain RM1221), this protein is 4-hydroxythreonine-4-phosphate dehydrogenase.